Reading from the N-terminus, the 993-residue chain is UPF0182 protein ROP_64500 (993 aa).

7 helical membrane-spanning segments follow: residues 18–38 (VLLV…RLIS), 63–83 (LLLF…ALLL), 114–134 (LFGL…AQSS), 174–194 (WLFV…YIFG), 211–231 (VQLA…YWFD), 260–280 (KLIL…AIFL), and 288–308 (MATA…PLVV). The disordered stretch occupies residues 904–948 (TGSVATAPSAEEGTPPETGTTPPVEQGAAPPAPTAPATPPSGTDV). The segment covering 908-926 (ATAPSAEEGTPPETGTTPP) has biased composition (low complexity). Pro residues predominate over residues 933-942 (PPAPTAPATP).

Belongs to the UPF0182 family.

It localises to the cell membrane. The chain is UPF0182 protein ROP_64500 from Rhodococcus opacus (strain B4).